We begin with the raw amino-acid sequence, 318 residues long: Thymidylate synthase (318 aa).

DUMP-binding positions include Arg-25 and 180–181 (RR). The active-site Nucleophile is Cys-200. DUMP is bound by residues 220 to 223 (RSGD), Asn-231, and 261 to 263 (HIY). Asp-223 is a (6R)-5,10-methylene-5,6,7,8-tetrahydrofolate binding site. Ala-317 is a binding site for (6R)-5,10-methylene-5,6,7,8-tetrahydrofolate.

Belongs to the thymidylate synthase family. Bacterial-type ThyA subfamily. In terms of assembly, homodimer.

The protein resides in the cytoplasm. It catalyses the reaction dUMP + (6R)-5,10-methylene-5,6,7,8-tetrahydrofolate = 7,8-dihydrofolate + dTMP. It functions in the pathway pyrimidine metabolism; dTTP biosynthesis. Functionally, catalyzes the reductive methylation of 2'-deoxyuridine-5'-monophosphate (dUMP) to 2'-deoxythymidine-5'-monophosphate (dTMP) while utilizing 5,10-methylenetetrahydrofolate (mTHF) as the methyl donor and reductant in the reaction, yielding dihydrofolate (DHF) as a by-product. This enzymatic reaction provides an intracellular de novo source of dTMP, an essential precursor for DNA biosynthesis. In Bacillus thuringiensis subsp. konkukian (strain 97-27), this protein is Thymidylate synthase.